The primary structure comprises 199 residues: dTTP/UTP pyrophosphatase (199 aa).

Residue D78 is the Proton acceptor of the active site.

Belongs to the Maf family. YhdE subfamily. A divalent metal cation serves as cofactor.

It localises to the cytoplasm. It carries out the reaction dTTP + H2O = dTMP + diphosphate + H(+). The enzyme catalyses UTP + H2O = UMP + diphosphate + H(+). Functionally, nucleoside triphosphate pyrophosphatase that hydrolyzes dTTP and UTP. May have a dual role in cell division arrest and in preventing the incorporation of modified nucleotides into cellular nucleic acids. In Clostridium acetobutylicum (strain ATCC 824 / DSM 792 / JCM 1419 / IAM 19013 / LMG 5710 / NBRC 13948 / NRRL B-527 / VKM B-1787 / 2291 / W), this protein is dTTP/UTP pyrophosphatase.